The sequence spans 139 residues: Non-structural protein 1 (139 aa).

The DLNP; interaction with MAP1B motif lies at 136 to 139 (DLNS).

It belongs to the pneumovirus non-structural protein 1 family. As to quaternary structure, monomer. Homomultimer. Heteromultimer with NS2. Interacts with the matrix protein M. Interacts with host ELOC and CUL2; this interaction allows NS1 to form an active E3 ligase with ELOC and CUL2. Interacts with host IRF3; this interaction leads to the disrupted association of IRF3 with CREBBP and thus reduced binding of IRF3 to the IFN-beta promoter. Interacts with host MAVS; this interaction prevents MAVS binding to RIGI and inhibits signaling pathway leading to interferon production. Interacts with host MAP1B/microtubule-associated protein 1B. Interacts with host TRIM25 (via SPRY domain); this interaction suppresses RIGI ubiquitination and results in decreased interaction between RIGI and MAVS.

Its subcellular location is the host cytoplasm. The protein resides in the host mitochondrion. It localises to the host nucleus. In terms of biological role, plays a major role in antagonizing the type I IFN-mediated antiviral response by degrading or inhibiting multiple cellular factors required for either IFN induction or response pathways. Acts cooperatively with NS2 to repress activation and nuclear translocation of host IFN-regulatory factor IRF3. Also disrupts the association of IRF3 with CREBBP. Interacts with host mitochondrial-associated membrane (MAM) MAVS and prevents the interaction with RIGI. Interacts with TRIM25 to suppress TRIM25-mediated RIGI ubiquitination and thereby RIGI-MAVS interaction. Together with NS2, participates in the proteasomal degradation of host STAT2, IRF3, IRF7, TBK1 and RIGI through a NS-degradasome involving CUL2 and Elongin-C. The degradasome requires an intact mitochondrial MAVS. Decreases the levels of host TRAF3 and IKBKE/IKK-epsilon. As functions other than disruptions of the type I IFN-mediated antiviral signaling pathways, induces host SOCS1 and SOCS3 expression. Suppresses premature apoptosis by an NF-kappa-B-dependent, interferon-independent mechanism and thus facilitates virus growth. Additionally, NS1 may serve some inhibitory role in viral transcription and RNA replication. Suppresses proliferation and activation of host CD103+ CD8+ cytotoxic T-lymphocytes and Th17 helper T-lymphocytes. The sequence is that of Non-structural protein 1 (1C) from Human respiratory syncytial virus B (strain 18537).